A 251-amino-acid chain; its full sequence is Derlin-1 (251 aa).

Ser2 carries the post-translational modification N-acetylserine. Over 2–15 (SDIGDWFRSIPAIT) the chain is Cytoplasmic. The chain crosses the membrane as a helical span at residues 16 to 31 (RYWFAATVAVPLIGKL). The Lumenal portion of the chain corresponds to 32–69 (GIISPAYFFLWPEAFLYRFQIWRPFTATFYFPVGPGTG). A helical transmembrane segment spans residues 70–89 (FLYLVNLYFLYQYSTRLEAG). At 90–94 (AFDGR) the chain is on the cytoplasmic side. Residues 95–115 (PADYLFMLLFNWICIVITGLA) form a helical membrane-spanning segment. Over 116 to 122 (MDMQLLM) the chain is Lumenal. The helical transmembrane segment at 123–137 (IPLIMSVLYVWAQLN) threads the bilayer. Over 138-154 (RDLIVSFWFGTRFKACY) the chain is Cytoplasmic. The helical transmembrane segment at 155 to 166 (LPWVILGFNYII) threads the bilayer. The Lumenal segment spans residues 167–170 (GGSV). The chain crosses the membrane as a helical span at residues 171-189 (INELIGNLVGHLYFFLMFR). The Cytoplasmic portion of the chain corresponds to 190–251 (YPMDLGGRNF…WGQGFRLGDQ (62 aa)). Residue Ser201 is modified to Phosphoserine. A Phosphothreonine modification is found at Thr202. Ser226 carries the phosphoserine modification. The segment at 229-251 (RAADQNGGGGRHNWGQGFRLGDQ) is disordered. An SHP-box motif is present at residues 241–248 (NWGQGFRL).

This sequence belongs to the derlin family. In terms of assembly, homotetramer. The four subunits of the tetramer are arranged in a twofold symmetry. Forms homo- and heterooligomers with DERL2 and DERL3; binding to DERL3 is poorer than that between DERL2 and DERL3. Interacts (via SHP-box motif) with VCP. Interacts with AMFR, SELENOS, SEL1L, SELENOK and SYVN1, as well as with SEL1L-SYVN1 and VCP-SELENOS protein complexes; this interaction is weaker than that observed between DERL2 and these complexes. Interacts with NGLY1 and YOD1. Does not bind to EDEM1. Interacts with DNAJB9. Interacts with RNF103. Interacts with HM13. Interacts with XBP1 isoform 1 (via luminal/ectodomain domain); the interaction obviates the need for ectodomain shedding prior HM13/SPP-mediated XBP1 isoform 1 cleavage. Interacts with the signal recognition particle/SRP and the SRP receptor; in the process of endoplasmic reticulum stress-induced pre-emptive quality control. May interact with UBXN6. Interacts with ZFAND2B; probably through VCP. Interacts with CCDC47. Interacts with C18orf32. May interact with TRAM1. Forms a complex with SVIP and VCP/p97. In terms of tissue distribution, widely expressed, with lowest levels in brain and heart.

Its subcellular location is the endoplasmic reticulum membrane. Functionally, functional component of endoplasmic reticulum-associated degradation (ERAD) for misfolded lumenal proteins. Forms homotetramers which encircle a large channel traversing the endoplasmic reticulum (ER) membrane. This allows the retrotranslocation of misfolded proteins from the ER into the cytosol where they are ubiquitinated and degraded by the proteasome. The channel has a lateral gate within the membrane which provides direct access to membrane proteins with no need to reenter the ER lumen first. May mediate the interaction between VCP and the misfolded protein. Also involved in endoplasmic reticulum stress-induced pre-emptive quality control, a mechanism that selectively attenuates the translocation of newly synthesized proteins into the endoplasmic reticulum and reroutes them to the cytosol for proteasomal degradation. By controlling the steady-state expression of the IGF1R receptor, indirectly regulates the insulin-like growth factor receptor signaling pathway. The protein is Derlin-1 of Mus musculus (Mouse).